The chain runs to 247 residues: MATNGEEQQSQAGRHQEVGHKSLLQSDALYQYILETSVYPREPECMKELREVTAKHPWNIMTTSADEGQFLNMLLKLVNAKNTMEIGVYTGYSLLATALAIPEDGKILAMDINRENYELGLPVIQKAGVAHKIDFKEGPALPVLDQMIEDGKYHGSFDFIFVDADKDNYINYHKRLIELVKVGGLIGYDNTLWNGSVVAPPDAPMRKYVRYYRDFVLELNKALAADPRIEICMLPVGDGITLCRRIQ.

Lys21 lines the substrate pocket. Residues Thr63, Glu85, Gly87 to Val88, Ser93, Asp111, and Ala140 each bind S-adenosyl-L-methionine. Residue Asp163 participates in substrate binding. Position 163 (Asp163) interacts with a divalent metal cation. Asp165 is an S-adenosyl-L-methionine binding site. A divalent metal cation is bound by residues Asp189 and Asn190. Substrate is bound at residue Asn194.

The protein belongs to the class I-like SAM-binding methyltransferase superfamily. Cation-dependent O-methyltransferase family. CCoAMT subfamily. The cofactor is a divalent metal cation.

The catalysed reaction is (E)-caffeoyl-CoA + S-adenosyl-L-methionine = (E)-feruloyl-CoA + S-adenosyl-L-homocysteine + H(+). It participates in aromatic compound metabolism; phenylpropanoid biosynthesis. Functionally, methylates caffeoyl-CoA to feruloyl-CoA and 5-hydroxyferuloyl-CoA to sinapoyl-CoA. Plays a role in the synthesis of feruloylated polysaccharides. Involved in the reinforcement of the plant cell wall. Also involved in the responding to wounding or pathogen challenge by the increased formation of cell wall-bound ferulic acid polymers. The sequence is that of Caffeoyl-CoA O-methyltransferase from Populus tremuloides (Quaking aspen).